The chain runs to 206 residues: Guanylate kinase (206 aa).

Residues G7 to L185 form the Guanylate kinase-like domain. A14–T21 lines the ATP pocket.

Belongs to the guanylate kinase family.

It is found in the cytoplasm. The catalysed reaction is GMP + ATP = GDP + ADP. Functionally, essential for recycling GMP and indirectly, cGMP. This Oleidesulfovibrio alaskensis (strain ATCC BAA-1058 / DSM 17464 / G20) (Desulfovibrio alaskensis) protein is Guanylate kinase.